Reading from the N-terminus, the 564-residue chain is Urocanate hydratase (564 aa).

Residues 58-59, Gln136, 182-184, Glu202, Arg207, 245-246, 266-270, 276-277, and Tyr325 contribute to the NAD(+) site; these read GG, GMG, NA, QTSAH, and YL. Cys413 is an active-site residue. Gly495 provides a ligand contact to NAD(+).

The protein belongs to the urocanase family. It depends on NAD(+) as a cofactor.

It localises to the cytoplasm. The catalysed reaction is 4-imidazolone-5-propanoate = trans-urocanate + H2O. It participates in amino-acid degradation; L-histidine degradation into L-glutamate; N-formimidoyl-L-glutamate from L-histidine: step 2/3. In terms of biological role, catalyzes the conversion of urocanate to 4-imidazolone-5-propionate. The polypeptide is Urocanate hydratase (Vibrio atlanticus (strain LGP32) (Vibrio splendidus (strain Mel32))).